We begin with the raw amino-acid sequence, 142 residues long: Probable transport accessory protein MmpS5 (142 aa).

Residues R7–Q26 traverse the membrane as a helical segment.

Belongs to the MmpS family.

It is found in the cell membrane. This is Probable transport accessory protein MmpS5 (mmpS5) from Mycobacterium bovis (strain ATCC BAA-935 / AF2122/97).